Reading from the N-terminus, the 474-residue chain is tRNA-2-methylthio-N(6)-dimethylallyladenosine synthase (474 aa).

Residues 3 to 120 enclose the MTTase N-terminal domain; that stretch reads KKLHIKTWGC…LPEMLNHVQG (118 aa). Residues cysteine 12, cysteine 49, cysteine 83, cysteine 157, cysteine 161, and cysteine 164 each coordinate [4Fe-4S] cluster. Positions 143-375 constitute a Radical SAM core domain; the sequence is RAEGPTAFVS…QDRINQQVLQ (233 aa). The TRAM domain maps to 378-441; it reads RRMLGTVQRI…TNSLRGTVVR (64 aa).

The protein belongs to the methylthiotransferase family. MiaB subfamily. In terms of assembly, monomer. [4Fe-4S] cluster serves as cofactor.

It is found in the cytoplasm. It catalyses the reaction N(6)-dimethylallyladenosine(37) in tRNA + (sulfur carrier)-SH + AH2 + 2 S-adenosyl-L-methionine = 2-methylsulfanyl-N(6)-dimethylallyladenosine(37) in tRNA + (sulfur carrier)-H + 5'-deoxyadenosine + L-methionine + A + S-adenosyl-L-homocysteine + 2 H(+). Catalyzes the methylthiolation of N6-(dimethylallyl)adenosine (i(6)A), leading to the formation of 2-methylthio-N6-(dimethylallyl)adenosine (ms(2)i(6)A) at position 37 in tRNAs that read codons beginning with uridine. This Serratia proteamaculans (strain 568) protein is tRNA-2-methylthio-N(6)-dimethylallyladenosine synthase.